The chain runs to 346 residues: tRNA N6-adenosine threonylcarbamoyltransferase (346 aa).

Positions 111 and 115 each coordinate Fe cation. Residues 134-138 (LVSGG), aspartate 167, glycine 180, and asparagine 279 each bind substrate. Aspartate 307 provides a ligand contact to Fe cation.

This sequence belongs to the KAE1 / TsaD family. It depends on Fe(2+) as a cofactor.

Its subcellular location is the cytoplasm. It catalyses the reaction L-threonylcarbamoyladenylate + adenosine(37) in tRNA = N(6)-L-threonylcarbamoyladenosine(37) in tRNA + AMP + H(+). In terms of biological role, required for the formation of a threonylcarbamoyl group on adenosine at position 37 (t(6)A37) in tRNAs that read codons beginning with adenine. Is involved in the transfer of the threonylcarbamoyl moiety of threonylcarbamoyl-AMP (TC-AMP) to the N6 group of A37, together with TsaE and TsaB. TsaD likely plays a direct catalytic role in this reaction. The chain is tRNA N6-adenosine threonylcarbamoyltransferase from Burkholderia ambifaria (strain MC40-6).